A 272-amino-acid polypeptide reads, in one-letter code: MEGNQAGSSLDSLIASFNKRIGELQELVIARNMYPASTIPDLSAIDTALSSMELQVQSIKDRLREETEAIPKAKKLIEASLKQQGKLQKMSIYAPSHFPDKATMLNSDLNRCLLQENAKQYEQHSTLSSLKFDEEAAVLPKEKKGRGSPPLWYITVEELNSLSSYMRGRLTLEKVNAAINDMASYAEANAHLIAASKQKLAENLWEKALKLRDIVTEQAVKGKHFFLETDMKGPSLKLDNTGKAILTVLRHLGRISETRIGQNRVIILMKPH.

Residues 48–75 adopt a coiled-coil conformation; that stretch reads ALSSMELQVQSIKDRLREETEAIPKAKK.

The protein belongs to the SKA1 family.

This Arabidopsis thaliana (Mouse-ear cress) protein is SKA complex subunit 1 homolog.